Reading from the N-terminus, the 420-residue chain is Carbohydrate sulfotransferase 12 (420 aa).

The Cytoplasmic portion of the chain corresponds to 1–5 (MAKSR). Residues 6–26 (LFCLLVALGSVFMILFIIVYW) form a helical; Signal-anchor for type II membrane protein membrane-spanning segment. The Lumenal segment spans residues 27-420 (DNVGTANLNL…YPKPDDLLSV (394 aa)). N-linked (GlcNAc...) asparagine glycosylation is found at Asn76 and Asn139. Position 176 to 182 (176 to 182 (PKVACTN)) interacts with 3'-phosphoadenylyl sulfate. The N-linked (GlcNAc...) asparagine glycan is linked to Asn215. A 3'-phosphoadenylyl sulfate-binding site is contributed by 251 to 259 (RDPFVRLIS). Residues Asn286 and Asn376 are each glycosylated (N-linked (GlcNAc...) asparagine).

This sequence belongs to the sulfotransferase 2 family.

It is found in the golgi apparatus membrane. The catalysed reaction is chondroitin beta-D-glucuronate + n 3'-phosphoadenylyl sulfate = chondroitin 4'-sulfate + n adenosine 3',5'-bisphosphate + n H(+). Functionally, catalyzes the transfer of sulfate to position 4 of the N-acetylgalactosamine (GalNAc) residue of chondroitin and desulfated dermatan sulfate. Chondroitin sulfate constitutes the predominant proteoglycan present in cartilage and is distributed on the surfaces of many cells and extracellular matrices. The polypeptide is Carbohydrate sulfotransferase 12 (chst12) (Xenopus laevis (African clawed frog)).